The chain runs to 283 residues: Putative 4-diphosphocytidyl-2-C-methyl-D-erythritol kinase (283 aa).

The active site involves K10. Position 94–104 (94–104) interacts with ATP; that stretch reads PVCAGLGGGST. D136 is a catalytic residue.

Belongs to the GHMP kinase family. IspE subfamily.

The enzyme catalyses 4-CDP-2-C-methyl-D-erythritol + ATP = 4-CDP-2-C-methyl-D-erythritol 2-phosphate + ADP + H(+). Its function is as follows. Catalyzes the phosphorylation of the position 2 hydroxy group of 4-diphosphocytidyl-2C-methyl-D-erythritol. The sequence is that of Putative 4-diphosphocytidyl-2-C-methyl-D-erythritol kinase from Streptococcus agalactiae serotype III (strain NEM316).